Here is a 216-residue protein sequence, read N- to C-terminus: Pyrophosphatase PpaX (216 aa).

Asp-9 (nucleophile) is an active-site residue.

This sequence belongs to the HAD-like hydrolase superfamily. PpaX family. The cofactor is Mg(2+).

It carries out the reaction diphosphate + H2O = 2 phosphate + H(+). Functionally, hydrolyzes pyrophosphate formed during P-Ser-HPr dephosphorylation by HPrK/P. Might play a role in controlling the intracellular pyrophosphate pool. The polypeptide is Pyrophosphatase PpaX (Bacillus cereus (strain B4264)).